A 156-amino-acid polypeptide reads, in one-letter code: Endoribonuclease YbeY (156 aa).

Zn(2+) contacts are provided by His-115, His-119, and His-125.

This sequence belongs to the endoribonuclease YbeY family. Zn(2+) serves as cofactor.

It is found in the cytoplasm. Functionally, single strand-specific metallo-endoribonuclease involved in late-stage 70S ribosome quality control and in maturation of the 3' terminus of the 16S rRNA. The protein is Endoribonuclease YbeY of Actinobacillus succinogenes (strain ATCC 55618 / DSM 22257 / CCUG 43843 / 130Z).